Consider the following 721-residue polypeptide: Polyribonucleotide nucleotidyltransferase (721 aa).

Residues Asp495 and Asp501 each coordinate Mg(2+). In terms of domain architecture, KH spans 562 to 621 (PRITTIKIRPERIKDIIGPGGKTIKDITARTGTSINIEDDGSVSIASPNQDKVEEAIKMI). Residues 631-699 (GRIYLGTVRK…RSGKIRLSRK (69 aa)) enclose the S1 motif domain. Residues 699–721 (KEALADSAKKSEGTEPPKGEPAK) are disordered.

It belongs to the polyribonucleotide nucleotidyltransferase family. It depends on Mg(2+) as a cofactor.

Its subcellular location is the cytoplasm. It carries out the reaction RNA(n+1) + phosphate = RNA(n) + a ribonucleoside 5'-diphosphate. Its function is as follows. Involved in mRNA degradation. Catalyzes the phosphorolysis of single-stranded polyribonucleotides processively in the 3'- to 5'-direction. The chain is Polyribonucleotide nucleotidyltransferase from Anaeromyxobacter dehalogenans (strain 2CP-1 / ATCC BAA-258).